The following is a 505-amino-acid chain: MTQRKVRVRFAPSPTGALHIGGVRTALYNYLFAKQNGGDMILRIEDTDSQRFVPGAEDYIIEALTWLGIKFDEGVSFGGNYGPYRQSERREIYKKYVDQLLNDGHAYIAFDTPAELEEKRKEIANFQYDASTRSQMRNSLTLSQEEVQSLIESGHQYVVRAKIEPNEDIHVNDLIRGEVVINSSILDDKVLYKSADQLPTYHLANIVDDHLMEVTHVIRGEEWLPSAPLHVLLYRFFGWEDTMPSFAHLSLLLKPEGNGKLSKRDGDRLGFPVFPLEWHDPKTGDVSSGYRESGYFPEAVVNFLALLGWNPGNDQEVMSMDDLIRLFDLSRCSKSGAKFDYEKGRWFNHHYLLEKSNAEIADLFLPIVESHGIQTTHAYVEKVVGMMKGRVNFVSELWDLCSFFFIAPTEYDEKTRKKRWKEDSAVQLGEFIEQLRAREPFDVEGTENECKAWIESKGYHLGNIMNAARLALVGEGKGPGIFDITEALGKEESIRRIQRAIEILK.

The short motif at 12 to 22 is the 'HIGH' region element; that stretch reads PSPTGALHIGG. The short motif at 260 to 264 is the 'KMSKS' region element; sequence KLSKR. Residue Lys263 coordinates ATP.

The protein belongs to the class-I aminoacyl-tRNA synthetase family. Glutamate--tRNA ligase type 1 subfamily. Monomer.

Its subcellular location is the cytoplasm. It carries out the reaction tRNA(Glu) + L-glutamate + ATP = L-glutamyl-tRNA(Glu) + AMP + diphosphate. Catalyzes the attachment of glutamate to tRNA(Glu) in a two-step reaction: glutamate is first activated by ATP to form Glu-AMP and then transferred to the acceptor end of tRNA(Glu). This Parabacteroides distasonis (strain ATCC 8503 / DSM 20701 / CIP 104284 / JCM 5825 / NCTC 11152) protein is Glutamate--tRNA ligase.